Reading from the N-terminus, the 348-residue chain is Protein RecA (348 aa).

66-73 contributes to the ATP binding site; that stretch reads GPESSGKT.

It belongs to the RecA family.

It localises to the cytoplasm. Can catalyze the hydrolysis of ATP in the presence of single-stranded DNA, the ATP-dependent uptake of single-stranded DNA by duplex DNA, and the ATP-dependent hybridization of homologous single-stranded DNAs. It interacts with LexA causing its activation and leading to its autocatalytic cleavage. This is Protein RecA from Burkholderia lata (strain ATCC 17760 / DSM 23089 / LMG 22485 / NCIMB 9086 / R18194 / 383).